A 74-amino-acid polypeptide reads, in one-letter code: Antimicrobial peptide HsAp4 (74 aa).

The first 21 residues, 1–21, serve as a signal peptide directing secretion; it reads MSRRRILILVLVTMLVKTMAG. A propeptide spanning residues 22 to 33 is cleaved from the precursor; that stretch reads MESKWVETTYEI. The residue at position 65 (R65) is an Arginine amide. Positions 69–74 are excised as a propeptide; that stretch reads AISEQT.

Belongs to the non-disulfide-bridged peptide (NDBP) superfamily. Medium-length antimicrobial peptide (group 3) family. In terms of tissue distribution, expressed by the venom gland.

It is found in the secreted. The protein resides in the target cell membrane. Possesses antimicrobial activity against both Gram-negative and Gram-positive bacteria, as well as against the fungus C.tropicalis. Also possesses a relatively high hemolytic activity. May act by disrupting the integrity of the bacterial cell membrane. This Heterometrus spinifer (Asia giant forest scorpion) protein is Antimicrobial peptide HsAp4.